The sequence spans 305 residues: UDP-3-O-acyl-N-acetylglucosamine deacetylase (305 aa).

Residues His79, His238, and Asp242 each coordinate Zn(2+). Residue His265 is the Proton donor of the active site.

The protein belongs to the LpxC family. Zn(2+) is required as a cofactor.

The catalysed reaction is a UDP-3-O-[(3R)-3-hydroxyacyl]-N-acetyl-alpha-D-glucosamine + H2O = a UDP-3-O-[(3R)-3-hydroxyacyl]-alpha-D-glucosamine + acetate. Its pathway is glycolipid biosynthesis; lipid IV(A) biosynthesis; lipid IV(A) from (3R)-3-hydroxytetradecanoyl-[acyl-carrier-protein] and UDP-N-acetyl-alpha-D-glucosamine: step 2/6. In terms of biological role, catalyzes the hydrolysis of UDP-3-O-myristoyl-N-acetylglucosamine to form UDP-3-O-myristoylglucosamine and acetate, the committed step in lipid A biosynthesis. This Proteus mirabilis (strain HI4320) protein is UDP-3-O-acyl-N-acetylglucosamine deacetylase.